Consider the following 382-residue polypeptide: Lactosylceramide 1,3-N-acetyl-beta-D-glucosaminyltransferase B (382 aa).

The Cytoplasmic portion of the chain corresponds to Met1–His13. The helical; Signal-anchor for type II membrane protein transmembrane segment at Leu14 to Trp30 threads the bilayer. At Glu31–Thr382 the chain is on the lumenal side. N-linked (GlcNAc...) asparagine glycosylation is found at Asn57, Asn112, Asn167, and Asn276.

It belongs to the glycosyltransferase 31 family.

The protein localises to the golgi apparatus membrane. It carries out the reaction a beta-D-Gal-(1-&gt;4)-beta-D-Glc-(1&lt;-&gt;1)-Cer(d18:1(4E)) + UDP-N-acetyl-alpha-D-glucosamine = a beta-D-GlcNAc-(1-&gt;3)-beta-D-Gal-(1-&gt;4)-beta-D-Glc-(1&lt;-&gt;1)-Cer(d18:1(4E)) + UDP + H(+). The enzyme catalyses a neolactoside nLc4Cer(d18:1(4E)) + UDP-N-acetyl-alpha-D-glucosamine = a neolactoside IV(3)-beta-GlcNAc-nLc4Cer(d18:1(4E)) + UDP + H(+). Its pathway is protein modification; protein glycosylation. In terms of biological role, beta-1,3-N-acetylglucosaminyltransferase that plays a key role in the synthesis of lacto- or neolacto-series carbohydrate chains on glycolipids. The sequence is that of Lactosylceramide 1,3-N-acetyl-beta-D-glucosaminyltransferase B (b3gnt5b) from Danio rerio (Zebrafish).